A 172-amino-acid chain; its full sequence is Co-chaperone protein HscB homolog (172 aa).

A J domain is found at 2–69 (NHFELFNLPV…DSRAAYLLAL (68 aa)).

It belongs to the HscB family. As to quaternary structure, interacts with HscA and stimulates its ATPase activity.

Functionally, co-chaperone involved in the maturation of iron-sulfur cluster-containing proteins. Seems to help targeting proteins to be folded toward HscA. The chain is Co-chaperone protein HscB homolog from Acinetobacter baumannii (strain AB307-0294).